The primary structure comprises 495 residues: UDP-N-acetylmuramoyl-L-alanyl-D-glutamate--2,6-diaminopimelate ligase (495 aa).

Serine 29 serves as a coordination point for UDP-N-acetyl-alpha-D-muramoyl-L-alanyl-D-glutamate. ATP is bound at residue 111 to 117 (GTNGKTS). Residues 153 to 154 (TT), serine 180, glutamine 186, and arginine 188 contribute to the UDP-N-acetyl-alpha-D-muramoyl-L-alanyl-D-glutamate site. An N6-carboxylysine modification is found at lysine 220. Meso-2,6-diaminopimelate is bound by residues arginine 384, 408–411 (DNPR), glycine 459, and glutamate 463. A Meso-diaminopimelate recognition motif motif is present at residues 408–411 (DNPR).

The protein belongs to the MurCDEF family. MurE subfamily. The cofactor is Mg(2+). In terms of processing, carboxylation is probably crucial for Mg(2+) binding and, consequently, for the gamma-phosphate positioning of ATP.

The protein resides in the cytoplasm. The enzyme catalyses UDP-N-acetyl-alpha-D-muramoyl-L-alanyl-D-glutamate + meso-2,6-diaminopimelate + ATP = UDP-N-acetyl-alpha-D-muramoyl-L-alanyl-gamma-D-glutamyl-meso-2,6-diaminopimelate + ADP + phosphate + H(+). It participates in cell wall biogenesis; peptidoglycan biosynthesis. In terms of biological role, catalyzes the addition of meso-diaminopimelic acid to the nucleotide precursor UDP-N-acetylmuramoyl-L-alanyl-D-glutamate (UMAG) in the biosynthesis of bacterial cell-wall peptidoglycan. The sequence is that of UDP-N-acetylmuramoyl-L-alanyl-D-glutamate--2,6-diaminopimelate ligase from Xylella fastidiosa (strain 9a5c).